Consider the following 228-residue polypeptide: Claudin-10 (228 aa).

Residues 1–21 (MASTASEIIAFMVSISGWVLV) traverse the membrane as a helical segment. At 22-80 (SSTLPTDYWKVSTIDGTVITTATYWANLWKACVTDSTGVSNCKDFPSMLALDGYIQACR) the chain is on the extracellular side. Residues 81 to 101 (GLMIAAVSLGFFGSIFALFGM) traverse the membrane as a helical segment. At 102 to 115 (KCTKVGGSDKAKAK) the chain is on the cytoplasmic side. A helical membrane pass occupies residues 116–136 (IACLAGIVFILSGLCSMTGCS). Residues 137–160 (LYANKITTEFFDPLFVEQKYELGA) lie on the Extracellular side of the membrane. Residues 161 to 181 (ALFIGWAGASLCIIGGVIFCF) traverse the membrane as a helical segment. Topologically, residues 182–228 (SISDNNKTPRYAYNGATSVMSSRTKYHGGEDFKTTNPSKQFDKNAYV) are cytoplasmic.

This sequence belongs to the claudin family. Can form homodimers both in trans (interaction between CLDN10 molecules in opposing membranes) and in cis (interaction between CLDN10 molecules within one membrane). Interacts with CLDN19.

It is found in the cell junction. It localises to the tight junction. Its subcellular location is the cell membrane. The catalysed reaction is Na(+)(in) = Na(+)(out). It carries out the reaction Li(+)(in) = Li(+)(out). It catalyses the reaction K(+)(in) = K(+)(out). The enzyme catalyses Rb(+)(in) = Rb(+)(out). The catalysed reaction is Cs(+)(in) = Cs(+)(out). It carries out the reaction NH4(+)(in) = NH4(+)(out). It catalyses the reaction methylamine(out) = methylamine(in). The enzyme catalyses Mg(2+)(in) = Mg(2+)(out). The catalysed reaction is Ca(2+)(in) = Ca(2+)(out). It carries out the reaction Sr(2+)(in) = Sr(2+)(out). It catalyses the reaction chloride(in) = chloride(out). The enzyme catalyses nitrate(in) = nitrate(out). Functionally, forms paracellular channels: polymerizes in tight junction strands with cation- and anion-selective channels through the strands, conveying epithelial permeability in a process known as paracellular tight junction permeability. In sweat glands and in the thick ascending limb (TAL) of Henle's loop in kidney, it controls paracellular sodium permeability which is essential for proper sweat production and renal function. In renal proximal tubules, it conveys selective chloride over hydrogencarbonate anion permeability which is required for renal chloride reabsorption and salt homeostasis. In Pongo abelii (Sumatran orangutan), this protein is Claudin-10 (CLDN10).